The following is a 657-amino-acid chain: Filensin (657 aa).

Positions 1-38 (MYRSSFLREVRKEKYERSDAYDELRGSPEFDSLAQAQG) are head. Residues 38–318 (GLENLQELNE…RIIENEDSRL (281 aa)) enclose the IF rod domain. The interval 39-73 (LENLQELNERFASYINRARVLEQRNTILRKQLETF) is coil 1A. The segment at 74-82 (QRMDELVGL) is linker 1. Residues 83 to 182 (DEAFAGQIEF…RYKKNLMEIQ (100 aa)) form a coil 1B region. The tract at residues 183–199 (TYVNILQQIIQTTPRVS) is linker 12. Residues 200–318 (PITTGISEEK…RIIENEDSRL (119 aa)) form a coil 2 region. Positions 319-657 (NSAIAGTPVT…SKKKPGDKGS (339 aa)) are tail. Disordered stretches follow at residues 503–530 (IGGD…ICER) and 565–593 (PDVS…TDHD). Over residues 519 to 530 (PSEKEKRDICER) the composition is skewed to basic and acidic residues.

The protein belongs to the intermediate filament family. As to expression, detected in eye lens fiber cells (at protein level). Detected in embryonic eye lens.

Its subcellular location is the cell membrane. The protein resides in the cytoplasm. The protein localises to the cytoskeleton. It is found in the cell cortex. Its function is as follows. Required for the correct formation of lens intermediate filaments. The sequence is that of Filensin (BFSP1) from Gallus gallus (Chicken).